A 235-amino-acid chain; its full sequence is Exotoxin type C (235 aa).

The first 27 residues, 1 to 27 (MKKINIIKIVFIITVILISTISPIIKS), serve as a signal peptide directing secretion. Residues H194, H228, and D230 each contribute to the Zn(2+) site.

This sequence belongs to the staphylococcal/streptococcal toxin family.

Functionally, superantigen that acts as a causative agent of the symptoms associated with scarlet fever. Has been associated with streptococcal toxic shock-like disease and may play a role in the early events of rheumatic fever. Superantigens cross-link major histocompatibility complex (MHC) class II and T-cell receptor (TCR) molecules, resulting in an overstimulation of T-cells associated with a massive release of pyrogenic and inflammatory cytokines. The protein is Exotoxin type C of Streptococcus pyogenes serotype M18 (strain MGAS8232).